A 364-amino-acid chain; its full sequence is 3-isopropylmalate dehydrogenase (364 aa).

79-92 is an NAD(+) binding site; the sequence is GPKWEHLPPDQQPE. The substrate site is built by R100, R110, R139, and D228. Residues D228, D252, and D256 each coordinate Mg(2+). 286 to 298 provides a ligand contact to NAD(+); it reads GSAPDIAGKNIAN.

It belongs to the isocitrate and isopropylmalate dehydrogenases family. LeuB type 1 subfamily. Homodimer. It depends on Mg(2+) as a cofactor. Requires Mn(2+) as cofactor.

The protein localises to the cytoplasm. It catalyses the reaction (2R,3S)-3-isopropylmalate + NAD(+) = 4-methyl-2-oxopentanoate + CO2 + NADH. It functions in the pathway amino-acid biosynthesis; L-leucine biosynthesis; L-leucine from 3-methyl-2-oxobutanoate: step 3/4. Its function is as follows. Catalyzes the oxidation of 3-carboxy-2-hydroxy-4-methylpentanoate (3-isopropylmalate) to 3-carboxy-4-methyl-2-oxopentanoate. The product decarboxylates to 4-methyl-2 oxopentanoate. In Escherichia coli (strain UTI89 / UPEC), this protein is 3-isopropylmalate dehydrogenase.